The primary structure comprises 426 residues: Tol-Pal system protein TolB (426 aa).

The first 25 residues, 1–25 (MNAMSRISRRIFLALALSLAGLAQA), serve as a signal peptide directing secretion.

This sequence belongs to the TolB family. The Tol-Pal system is composed of five core proteins: the inner membrane proteins TolA, TolQ and TolR, the periplasmic protein TolB and the outer membrane protein Pal. They form a network linking the inner and outer membranes and the peptidoglycan layer.

Its subcellular location is the periplasm. Part of the Tol-Pal system, which plays a role in outer membrane invagination during cell division and is important for maintaining outer membrane integrity. The protein is Tol-Pal system protein TolB of Dechloromonas aromatica (strain RCB).